The following is a 162-amino-acid chain: Functional amyloid chaperone FapA (162 aa).

The first 28 residues, 1–28 (MSGSSLRIVVPALLVIVGSVPVSLPAHA), serve as a signal peptide directing secretion.

Belongs to the FapA family. Monomer in solution. Interacts with FapC but not FapB in vitro.

The protein localises to the periplasm. An intrinsically disordered chaperone for fibril amyloid FapC that guards against fibrillation within the periplasm. Upon overexpression of the endogenous six-gene locus (fapA-fapF), cells form large clumps during liquid growth, make large amounts of biofilm and produce amyloid fibrils. The polypeptide is Functional amyloid chaperone FapA (Pseudomonas aeruginosa (strain ATCC 15692 / DSM 22644 / CIP 104116 / JCM 14847 / LMG 12228 / 1C / PRS 101 / PAO1)).